A 98-amino-acid polypeptide reads, in one-letter code: Dehydrin HIRD11 (98 aa).

The disordered stretch occupies residues 1–98 (MAGLINKIGD…HSSSSDSDSD (98 aa)). Over residues 19–72 (KEGEHKKEEEHKKHVDEHKSGEHKEGIVDKIKDKIHGGEGKSHDGEGKSHDGEK) the composition is skewed to basic and acidic residues. Residues 73–82 (KKKKDKKEKK) are compositionally biased toward basic residues.

This sequence belongs to the KS-type dehydrin family. Interacts with PXL1. In terms of processing, phosphorylated in vivo. Phosphorylated in vitro by PXL1. In terms of tissue distribution, highly expressed in the cambial zone of the stem vasculature (at protein level). Expressed in roots, rosettes leaves, stems, cauline leaves, flowers and siliques.

Its subcellular location is the cytoplasm. The protein localises to the nucleus. Its function is as follows. Intrinsically disordered and metal-binding protein. Binds to the divalent cations cobalt, nickel, copper and zinc, but not to magnesium, calcium, manganese or cadmium. Binding to metal ions decreases disordered state, decreases susceptibility to trypsin and promotes self-association. Can reduce the formation of reactive oxygen species (ROS) in a copper-ascorbate in vitro system. This is Dehydrin HIRD11 from Arabidopsis thaliana (Mouse-ear cress).